The following is a 104-amino-acid chain: Large ribosomal subunit protein uL24 (104 aa).

It belongs to the universal ribosomal protein uL24 family. Part of the 50S ribosomal subunit.

One of two assembly initiator proteins, it binds directly to the 5'-end of the 23S rRNA, where it nucleates assembly of the 50S subunit. Its function is as follows. One of the proteins that surrounds the polypeptide exit tunnel on the outside of the subunit. The chain is Large ribosomal subunit protein uL24 from Shewanella denitrificans (strain OS217 / ATCC BAA-1090 / DSM 15013).